A 198-amino-acid polypeptide reads, in one-letter code: Glycerol-3-phosphate acyltransferase 1 (198 aa).

5 helical membrane passes run 5-25 (ALLALLLSYLIGAIPAAAWLA), 52-72 (GPALLVASFDILKGVLAVLLA), 81-101 (WAALCGVLAVIGHNFSPFLAF), 111-131 (FGVIAILDPVLGLTTFVLAIA), and 138-158 (FVSAGSIMGAFIAGALVLVLP).

Belongs to the PlsY family. As to quaternary structure, probably interacts with PlsX.

The protein resides in the cell membrane. The enzyme catalyses an acyl phosphate + sn-glycerol 3-phosphate = a 1-acyl-sn-glycero-3-phosphate + phosphate. It participates in lipid metabolism; phospholipid metabolism. In terms of biological role, catalyzes the transfer of an acyl group from acyl-phosphate (acyl-PO(4)) to glycerol-3-phosphate (G3P) to form lysophosphatidic acid (LPA). This enzyme utilizes acyl-phosphate as fatty acyl donor, but not acyl-CoA or acyl-ACP. The protein is Glycerol-3-phosphate acyltransferase 1 of Deinococcus radiodurans (strain ATCC 13939 / DSM 20539 / JCM 16871 / CCUG 27074 / LMG 4051 / NBRC 15346 / NCIMB 9279 / VKM B-1422 / R1).